A 541-amino-acid chain; its full sequence is Glutamine-dependent NAD(+) synthetase (541 aa).

In terms of domain architecture, CN hydrolase spans 4-243 (FKIALAQFSP…EELYYSEFDI (240 aa)). Catalysis depends on glutamate 44, which acts as the Proton acceptor; for glutaminase activity. The active-site For glutaminase activity is the lysine 111. Tyrosine 117 contacts L-glutamine. The active-site Nucleophile; for glutaminase activity is cysteine 147. Positions 173 and 179 each coordinate L-glutamine. 286–293 (GLSGGIDS) contacts ATP. A deamido-NAD(+)-binding site is contributed by asparagine 369. Threonine 393 lines the ATP pocket. Deamido-NAD(+)-binding residues include glutamate 398 and lysine 510.

In the C-terminal section; belongs to the NAD synthetase family.

It carries out the reaction deamido-NAD(+) + L-glutamine + ATP + H2O = L-glutamate + AMP + diphosphate + NAD(+) + H(+). Its pathway is cofactor biosynthesis; NAD(+) biosynthesis; NAD(+) from deamido-NAD(+) (L-Gln route): step 1/1. Its function is as follows. Catalyzes the ATP-dependent amidation of deamido-NAD to form NAD. Uses L-glutamine as a nitrogen source. In vitro, can also use ammonia as donor with comparable specific activity, but cannot use nicotinate mononucleotide (NaMN) as substrate. This Acinetobacter baylyi (strain ATCC 33305 / BD413 / ADP1) protein is Glutamine-dependent NAD(+) synthetase.